The chain runs to 865 residues: Prominin-1 (865 aa).

Positions 1–19 (MALVLGSLLLLGLCGNSFS) are cleaved as a signal peptide. Residues 20-108 (GGQPSSTDAP…GLKIVYYEAG (89 aa)) lie on the Extracellular side of the membrane. A helical transmembrane segment spans residues 109–129 (IILCCVLGLLFIILMPLVGYF). Residues 130-157 (FCMCRCCNKCGGEMHQRQKENGPFLRKC) lie on the Cytoplasmic side of the membrane. Residues 158 to 178 (FAISLLVICIIISIGIFYGFV) traverse the membrane as a helical segment. At 179 to 433 (ANHQVRTRIK…LPTLEEYDSY (255 aa)) the chain is on the extracellular side. Asparagine 220 carries an N-linked (GlcNAc...) asparagine glycan. 3 positions are modified to N6-acetyllysine: lysine 225, lysine 257, and lysine 264. 3 N-linked (GlcNAc...) asparagine glycosylation sites follow: asparagine 274, asparagine 395, and asparagine 414. A helical transmembrane segment spans residues 434–454 (WWLGGLVICSLLTLIVIFYYL). At 455-486 (GLLCGVCGYDRHATPTTRGCVSNTGGVFLMVG) the chain is on the cytoplasmic side. Residues 487–507 (VGLSFLFCWILMIIVVLTFVF) form a helical membrane-spanning segment. The Extracellular portion of the chain corresponds to 508-792 (GANVEKLICE…LCSYIIDPLN (285 aa)). Residues asparagine 548, asparagine 580, asparagine 729, and asparagine 730 are each glycosylated (N-linked (GlcNAc...) asparagine). Residues 793-813 (LFWFGIGKATVFLLPALIFAV) form a helical membrane-spanning segment. The Cytoplasmic segment spans residues 814–865 (KLAKYYRRMDSEDVYDDVETIPMKNMENGNNGYHKDHVYGIHNPVMTSPSQH). Residue serine 863 is modified to Phosphoserine.

It belongs to the prominin family. As to quaternary structure, interacts with CDHR1 and with actin filaments. Interacts with NAT8 and NAT8B. Isoform 1 and isoform 2 are glycosylated. Post-translationally, acetylation at Lys-225, Lys-257 and Lys-264 by NAT8 and NAT8B may control PROM1 protein expression and its function in cell apoptosis. As to expression, isoform 1 is selectively expressed on CD34 hematopoietic stem and progenitor cells in adult and fetal bone marrow, fetal liver, cord blood and adult peripheral blood. Isoform 1 is not detected on other blood cells. Isoform 1 is also expressed in a number of non-lymphoid tissues including retina, pancreas, placenta, kidney, liver, lung, brain and heart. Found in saliva within small membrane particles. Isoform 2 is predominantly expressed in fetal liver, skeletal muscle, kidney, and heart as well as adult pancreas, kidney, liver, lung, and placenta. Isoform 2 is highly expressed in fetal liver, low in bone marrow, and barely detectable in peripheral blood. Isoform 2 is expressed on hematopoietic stem cells and in epidermal basal cells (at protein level). Expressed in adult retina by rod and cone photoreceptor cells (at protein level).

The protein resides in the apical cell membrane. The protein localises to the cell projection. It localises to the microvillus membrane. It is found in the cilium. Its subcellular location is the photoreceptor outer segment. The protein resides in the endoplasmic reticulum. The protein localises to the endoplasmic reticulum-Golgi intermediate compartment. May play a role in cell differentiation, proliferation and apoptosis. Binds cholesterol in cholesterol-containing plasma membrane microdomains and may play a role in the organization of the apical plasma membrane in epithelial cells. During early retinal development acts as a key regulator of disk morphogenesis. Involved in regulation of MAPK and Akt signaling pathways. In neuroblastoma cells suppresses cell differentiation such as neurite outgrowth in a RET-dependent manner. The protein is Prominin-1 (PROM1) of Homo sapiens (Human).